The chain runs to 688 residues: Translation initiation factor IF-2 (688 aa).

The interval Lys-54–Asn-95 is disordered. The span at Lys-86 to Asn-95 shows a compositional bias: basic and acidic residues. Residues Lys-187–Glu-354 enclose the tr-type G domain. The interval Gly-196–Thr-203 is G1. A GTP-binding site is contributed by Gly-196–Thr-203. Positions Gly-221–His-225 are G2. The G3 stretch occupies residues Asp-242–Gly-245. GTP-binding positions include Asp-242–His-246 and Asn-296–Asp-299. The tract at residues Asn-296–Asp-299 is G4. Residues Ser-332–His-334 are G5.

Belongs to the TRAFAC class translation factor GTPase superfamily. Classic translation factor GTPase family. IF-2 subfamily.

It is found in the cytoplasm. In terms of biological role, one of the essential components for the initiation of protein synthesis. Protects formylmethionyl-tRNA from spontaneous hydrolysis and promotes its binding to the 30S ribosomal subunits. Also involved in the hydrolysis of GTP during the formation of the 70S ribosomal complex. The polypeptide is Translation initiation factor IF-2 (Clostridium botulinum (strain Okra / Type B1)).